The following is a 106-amino-acid chain: Oncosphere antigen B (106 aa).

The Fibronectin type-III domain maps to L11–K106.

This chain is Oncosphere antigen B (ONCB), found in Hydatigena taeniaeformis (Feline tapeworm).